The following is a 160-amino-acid chain: Succinate dehydrogenase assembly factor 2-A, mitochondrial (160 aa).

A mitochondrion-targeting transit peptide spans methionine 1–valine 30.

The protein belongs to the SDHAF2 family. As to quaternary structure, interacts with the flavoprotein subunit within the SDH catalytic dimer.

Its subcellular location is the mitochondrion matrix. In terms of biological role, plays an essential role in the assembly of succinate dehydrogenase (SDH), an enzyme complex (also referred to as respiratory complex II) that is a component of both the tricarboxylic acid (TCA) cycle and the mitochondrial electron transport chain, and which couples the oxidation of succinate to fumarate with the reduction of ubiquinone (coenzyme Q) to ubiquinol. Required for flavinylation (covalent attachment of FAD) of the flavoprotein subunit of the SDH catalytic dimer. This Drosophila persimilis (Fruit fly) protein is Succinate dehydrogenase assembly factor 2-A, mitochondrial.